The following is a 417-amino-acid chain: Tumor necrosis factor receptor superfamily member 25 (417 aa).

A signal peptide spans 1–24 (MEQRPRGCAAVAAALLLVLLGARA). At 25 to 199 (QGGTRSPRCD…RCAAVCGWRQ (175 aa)) the chain is on the extracellular side. TNFR-Cys repeat units follow at residues 34-71 (DCAGDFHKKIGLFCCRGCPAGHYLKAPCTEPCGNSTCL), 72-115 (VCPQ…DTRC), 116-163 (GCKP…TDCG), and 164-192 (TCLPGFYEHGDGCVSCPTSTLGSCPERCA). Intrachain disulfides connect C35–C47, C48–C61, C51–C70, C73–C89, C92–C107, C95–C115, C117–C130, C138–C155, C141–C162, C165–C176, C179–C191, and C187–C195. N-linked (GlcNAc...) asparagine glycosylation occurs at N67. N106 carries N-linked (GlcNAc...) asparagine glycosylation. Residues 200–220 (MFWVQVLLAGLVVPLLLGATL) traverse the membrane as a helical segment. At 221 to 417 (TYTYRHCWPH…DLRSRLQRGP (197 aa)) the chain is on the cytoplasmic side. One can recognise a Death domain in the interval 332-413 (GPQLYDVMDA…GCVEDLRSRL (82 aa)). The (Microbial infection) N-beta-linked (GlcNAc) arginine glycan is linked to R352.

In terms of assembly, homodimer. Interacts strongly via the death domains with TNFRSF1 and TRADD to activate at least two distinct signaling cascades, apoptosis and NF-kappa-B signaling. Interacts with BAG4. In terms of processing, (Microbial infection) Glycosylated at Arg-352 by enteropathogenic E.coli protein NleB1. Post-translationally, glycosylated. In terms of tissue distribution, abundantly expressed in thymocytes and lymphocytes. Detected in lymphocyte-rich tissues such as thymus, colon, intestine, and spleen. Also found in the prostate.

It is found in the cell membrane. It localises to the secreted. Receptor for TNFSF12/APO3L/TWEAK. Interacts directly with the adapter TRADD. Mediates activation of NF-kappa-B and induces apoptosis. May play a role in regulating lymphocyte homeostasis. The chain is Tumor necrosis factor receptor superfamily member 25 (TNFRSF25) from Homo sapiens (Human).